The sequence spans 325 residues: Glutarate 2-hydroxylase (325 aa).

Positions 160, 162, and 292 each coordinate Fe cation.

It belongs to the glutarate hydroxylase family. In terms of assembly, homotetramer. It depends on Fe(2+) as a cofactor.

The catalysed reaction is glutarate + 2-oxoglutarate + O2 = (S)-2-hydroxyglutarate + succinate + CO2. Its pathway is amino-acid degradation. Its function is as follows. Acts as an alpha-ketoglutarate-dependent dioxygenase catalyzing hydroxylation of glutarate (GA) to L-2-hydroxyglutarate (L2HG). Functions in a L-lysine degradation pathway that proceeds via cadaverine, glutarate and L-2-hydroxyglutarate. The sequence is that of Glutarate 2-hydroxylase from Shigella boydii serotype 18 (strain CDC 3083-94 / BS512).